The sequence spans 157 residues: UPF0251 protein CLJ_B1488 (157 aa).

The protein belongs to the UPF0251 family.

In Clostridium botulinum (strain 657 / Type Ba4), this protein is UPF0251 protein CLJ_B1488.